A 230-amino-acid chain; its full sequence is Demethylmenaquinone methyltransferase (230 aa).

S-adenosyl-L-methionine contacts are provided by residues Thr-62, Asp-80, 100-101 (DG), and Ser-117.

It belongs to the class I-like SAM-binding methyltransferase superfamily. MenG/UbiE family.

It carries out the reaction a 2-demethylmenaquinol + S-adenosyl-L-methionine = a menaquinol + S-adenosyl-L-homocysteine + H(+). Its pathway is quinol/quinone metabolism; menaquinone biosynthesis; menaquinol from 1,4-dihydroxy-2-naphthoate: step 2/2. Functionally, methyltransferase required for the conversion of demethylmenaquinol (DMKH2) to menaquinol (MKH2). The chain is Demethylmenaquinone methyltransferase from Corynebacterium urealyticum (strain ATCC 43042 / DSM 7109).